An 89-amino-acid polypeptide reads, in one-letter code: Small ribosomal subunit protein uS15 (89 aa).

This sequence belongs to the universal ribosomal protein uS15 family. In terms of assembly, part of the 30S ribosomal subunit. Forms a bridge to the 50S subunit in the 70S ribosome, contacting the 23S rRNA.

In terms of biological role, one of the primary rRNA binding proteins, it binds directly to 16S rRNA where it helps nucleate assembly of the platform of the 30S subunit by binding and bridging several RNA helices of the 16S rRNA. Its function is as follows. Forms an intersubunit bridge (bridge B4) with the 23S rRNA of the 50S subunit in the ribosome. This is Small ribosomal subunit protein uS15 from Chlamydia felis (strain Fe/C-56) (Chlamydophila felis).